Reading from the N-terminus, the 230-residue chain is RING finger protein 141 (230 aa).

A lipid anchor (N-myristoyl glycine) is attached at G2. The RING-type zinc-finger motif lies at 155-192; the sequence is CCICMDGRADLILPCAHSFCQKCIDKWSDRHRNCPICR.

Isoform 1 is testis-specific. Isoform 2 is expressed in heart, brain, skeletal muscle, kidney, pancreas, lung, liver and testis. Isoform 3 is expressed in heart, liver, and kidney.

It is found in the membrane. In terms of biological role, may be involved in spermatogenesis. The chain is RING finger protein 141 (Rnf141) from Mus musculus (Mouse).